A 151-amino-acid polypeptide reads, in one-letter code: HTH-type transcriptional regulator TcaR (151 aa).

An HTH marR-type domain is found at 1-142 (MVKHLQDHIQ…VRQVLEVINH (142 aa)). The segment at residues 54 to 77 (ISEITQRQGVNKAAVSRRIKKLID) is a DNA-binding region (H-T-H motif).

Functionally, involved in the antibiotic teicoplanin susceptibility. Inactivation of the tcaRAB operon leads to teicoplanin resistance. Its function is as follows. Is a weak negative regulator of transcription of the icaABD operon. This Staphylococcus aureus (strain COL) protein is HTH-type transcriptional regulator TcaR (tcaR).